The chain runs to 428 residues: Hydrolase acrC (428 aa).

Ser248 is a catalytic residue.

The protein belongs to the AB hydrolase superfamily. FUS2 hydrolase family.

It functions in the pathway secondary metabolite biosynthesis. Its function is as follows. Hydrolase; part of the cluster that mediates the biosynthesis of acurin A, a highly reduced polyketide coupled to a serine via a peptide bond. The activities of the highly reducing polyketide synthase acrA and the nonribosomal peptide synthetase acrB are collectively responsible for the synthesis of the acurin A core structure with a heptaketide backbone produced by acrA covalently fused to a L-serine by acrB. After the formation of the PK-NRP hybrid product, it is detached from acrB by reductive release to set up the formation of the lactam ring by aldol condensation. The hydrolyase acrC then catalyzes water loss to generate a double bond in the ring. This double bond is probably reduced, which is followed by three oxidations at C-22 to generate the carboxylic acid moiety, involving probably the FAD-binding monooxygenase acrE and the cytochrome P450 monooxygenases acrD and acrF. Finally, a last methylation step performed by the O-methyltransferase acrG leads to the production of acurin A. The sequence is that of Hydrolase acrC from Aspergillus aculeatus (strain ATCC 16872 / CBS 172.66 / WB 5094).